A 1131-amino-acid polypeptide reads, in one-letter code: DNA polymerase II large subunit (1131 aa).

This sequence belongs to the archaeal DNA polymerase II family. As to quaternary structure, heterodimer of a large subunit and a small subunit.

The enzyme catalyses DNA(n) + a 2'-deoxyribonucleoside 5'-triphosphate = DNA(n+1) + diphosphate. The catalysed reaction is Exonucleolytic cleavage in the 3'- to 5'-direction to yield nucleoside 5'-phosphates.. Its function is as follows. Possesses two activities: a DNA synthesis (polymerase) and an exonucleolytic activity that degrades single-stranded DNA in the 3'- to 5'-direction. Has a template-primer preference which is characteristic of a replicative DNA polymerase. This is DNA polymerase II large subunit from Methanococcus maripaludis (strain DSM 14266 / JCM 13030 / NBRC 101832 / S2 / LL).